Reading from the N-terminus, the 246-residue chain is MADS-box transcription factor 14 (246 aa).

Residues 1 to 61 enclose the MADS-box domain; sequence MGRGKVQLKR…GKLYKYATDS (61 aa). Residues 88–178 form the K-box domain; that stretch reads QGNWCHEYRK…QKELVEKQKV (91 aa). The tract at residues 180 to 199 is disordered; sequence KQQVQWDQTQPQTSSSSSSF.

In terms of tissue distribution, highly expressed in sterile lemmas, at intermediate levels in stamens, and weakly in lemmas, paleas and carpels.

It localises to the nucleus. In terms of biological role, probable transcription factor. This chain is MADS-box transcription factor 14 (MADS14), found in Oryza sativa subsp. indica (Rice).